The following is a 49-amino-acid chain: MADKGDQSSYLIKFISTAPVAATIWLTITAGILIEFNRFFPDLLFHPLP.

Residues Phe14–Ile34 form a helical membrane-spanning segment.

Belongs to the PsaJ family.

It is found in the cellular thylakoid membrane. May help in the organization of the PsaE and PsaF subunits. This is Photosystem I reaction center subunit IX from Nostoc punctiforme (strain ATCC 29133 / PCC 73102).